Here is a 32-residue protein sequence, read N- to C-terminus: Giant hemoglobin AIV chain (32 aa).

The protein belongs to the globin family. Giant hemoglobin is composed of four heme-containing chains (AI to AIV), and two linker chains (AV and AVI).

This chain is Giant hemoglobin AIV chain, found in Lamellibrachia sp. (Deep-sea giant tube worm).